Reading from the N-terminus, the 418-residue chain is Queuine tRNA-ribosyltransferase accessory subunit 2 (418 aa).

C325, C327, C330, and H356 together coordinate Zn(2+).

It belongs to the queuine tRNA-ribosyltransferase family. QTRT2 subfamily. In terms of assembly, heterodimer of a catalytic subunit and an accessory subunit. The cofactor is Zn(2+).

The protein resides in the cytoplasm. Its function is as follows. Non-catalytic subunit of the queuine tRNA-ribosyltransferase (TGT) that catalyzes the base-exchange of a guanine (G) residue with queuine (Q) at position 34 (anticodon wobble position) in tRNAs with GU(N) anticodons (tRNA-Asp, -Asn, -His and -Tyr), resulting in the hypermodified nucleoside queuosine (7-(((4,5-cis-dihydroxy-2-cyclopenten-1-yl)amino)methyl)-7-deazaguanosine). The sequence is that of Queuine tRNA-ribosyltransferase accessory subunit 2 from Drosophila sechellia (Fruit fly).